The primary structure comprises 168 residues: UPF0114 protein PC1_0431 (168 aa).

Helical transmembrane passes span 15 to 35, 53 to 73, and 136 to 156; these read LLAPVYLGLSLGLLALAIKFF, LVLVLLSLIDMTLVGGLLVMV, and LMWYVIIHLTFVLSALVMGYL.

Belongs to the UPF0114 family.

It localises to the cell membrane. The protein is UPF0114 protein PC1_0431 of Pectobacterium carotovorum subsp. carotovorum (strain PC1).